We begin with the raw amino-acid sequence, 563 residues long: Arginine--tRNA ligase (563 aa).

The 'HIGH' region motif lies at 122 to 132; that stretch reads PNIAKPMSMGH.

Belongs to the class-I aminoacyl-tRNA synthetase family. In terms of assembly, monomer.

It is found in the cytoplasm. It catalyses the reaction tRNA(Arg) + L-arginine + ATP = L-arginyl-tRNA(Arg) + AMP + diphosphate. This Levilactobacillus brevis (strain ATCC 367 / BCRC 12310 / CIP 105137 / JCM 1170 / LMG 11437 / NCIMB 947 / NCTC 947) (Lactobacillus brevis) protein is Arginine--tRNA ligase.